Here is a 457-residue protein sequence, read N- to C-terminus: Argininosuccinate lyase (457 aa).

Belongs to the lyase 1 family. Argininosuccinate lyase subfamily.

The protein localises to the cytoplasm. The enzyme catalyses 2-(N(omega)-L-arginino)succinate = fumarate + L-arginine. Its pathway is amino-acid biosynthesis; L-arginine biosynthesis; L-arginine from L-ornithine and carbamoyl phosphate: step 3/3. In Escherichia coli O9:H4 (strain HS), this protein is Argininosuccinate lyase.